We begin with the raw amino-acid sequence, 301 residues long: Peptidyl-prolyl isomerase CWC27 (301 aa).

Residues 9 to 159 (TTAKCILYTT…YPAVLKDVEI (151 aa)) enclose the PPIase cyclophilin-type domain. The disordered stretch occupies residues 251 to 280 (TELHDNVDEATTKETESQENIKEEPMDKRE).

This sequence belongs to the cyclophilin-type PPIase family. CWC27 subfamily. As to quaternary structure, belongs to the CWC complex (or CEF1-associated complex), a spliceosome subcomplex composed of the U2, U5 and U6 snRNAs and at least BUD13, BUD31, BRR2, CDC40, CEF1, CLF1, CUS1, CWC2, CWC15, CWC21, CWC22, CWC23, CWC24, CWC25, CWC27, ECM2, HSH155, IST3, ISY1, LEA1, MSL1, NTC20, PRP8, PRP9, PRP11, PRP19, PRP21, PRP22, PRP45, PRP46, SLU7, SMB1, SMD1, SMD2, SMD3, SMX2, SMX3, SNT309, SNU114, SPP2, SYF1, SYF2, RSE1 and YJU2.

Its subcellular location is the cytoplasm. It is found in the nucleus. The catalysed reaction is [protein]-peptidylproline (omega=180) = [protein]-peptidylproline (omega=0). PPIases accelerate the folding of proteins. Catalyzes the cis-trans isomerization of proline imidic peptide bonds in oligopeptides. Involved in pre-mRNA splicing. This Saccharomyces cerevisiae (strain ATCC 204508 / S288c) (Baker's yeast) protein is Peptidyl-prolyl isomerase CWC27 (CWC27).